The chain runs to 403 residues: S-adenosylmethionine synthase (403 aa).

Residue histidine 17 coordinates ATP. Mg(2+) is bound at residue aspartate 19. Residue glutamate 45 coordinates K(+). L-methionine is bound by residues glutamate 58 and glutamine 104. The tract at residues 104–114 (QSPDIAQGVDT) is flexible loop. ATP contacts are provided by residues 179 to 181 (DGK), 250 to 251 (KF), aspartate 259, 265 to 266 (RK), alanine 282, and lysine 286. Aspartate 259 is an L-methionine binding site. Residue lysine 290 coordinates L-methionine.

This sequence belongs to the AdoMet synthase family. As to quaternary structure, homotetramer; dimer of dimers. It depends on Mg(2+) as a cofactor. The cofactor is K(+).

The protein resides in the cytoplasm. It catalyses the reaction L-methionine + ATP + H2O = S-adenosyl-L-methionine + phosphate + diphosphate. It functions in the pathway amino-acid biosynthesis; S-adenosyl-L-methionine biosynthesis; S-adenosyl-L-methionine from L-methionine: step 1/1. Catalyzes the formation of S-adenosylmethionine (AdoMet) from methionine and ATP. The overall synthetic reaction is composed of two sequential steps, AdoMet formation and the subsequent tripolyphosphate hydrolysis which occurs prior to release of AdoMet from the enzyme. The polypeptide is S-adenosylmethionine synthase (Mycobacterium marinum (strain ATCC BAA-535 / M)).